The primary structure comprises 265 residues: Undecaprenyl-diphosphatase (265 aa).

A run of 7 helical transmembrane segments spans residues 38–58, 75–95, 108–128, 135–155, 181–201, 215–235, and 244–264; these read RSDF…CLAL, RDYV…GLIV, PVAW…HFAG, VVTW…GVFP, FVFM…LLEM, VAVA…WLLG, and VFAV…PAAA.

This sequence belongs to the UppP family.

It localises to the cell inner membrane. The catalysed reaction is di-trans,octa-cis-undecaprenyl diphosphate + H2O = di-trans,octa-cis-undecaprenyl phosphate + phosphate + H(+). Catalyzes the dephosphorylation of undecaprenyl diphosphate (UPP). Confers resistance to bacitracin. The sequence is that of Undecaprenyl-diphosphatase from Xanthomonas axonopodis pv. citri (strain 306).